Consider the following 440-residue polypeptide: Mitochondrial translation factor 2 (440 aa).

The transit peptide at 1 to 15 directs the protein to the mitochondrion; the sequence is MIRTSSILKNCNYRY.

The protein resides in the mitochondrion matrix. In terms of biological role, required for the processing and/or for the stability of the CYTB and COX1 intron-containing pre-mRNAs and of the ATP6 transcript. Could be a stem-loop RNA-binding protein that plays a role in determining RNA stability. The protein is Mitochondrial translation factor 2 (MTF2) of Saccharomyces cerevisiae (strain ATCC 204508 / S288c) (Baker's yeast).